The primary structure comprises 237 residues: UPF0758 protein Aave_3773 (237 aa).

The 123-residue stretch at 115–237 folds into the MPN domain; it reads LFHSPRAVRD…SLSMAEEGLI (123 aa). Residues His186, His188, and Asp199 each coordinate Zn(2+). A JAMM motif motif is present at residues 186-199; the sequence is HNHPSGQVQPSRAD.

The protein belongs to the UPF0758 family.

The chain is UPF0758 protein Aave_3773 from Paracidovorax citrulli (strain AAC00-1) (Acidovorax citrulli).